The chain runs to 137 residues: Small ribosomal subunit protein uS9 (137 aa).

Over residues 105–117 (LKVEGYLTRDPRA) the composition is skewed to basic and acidic residues. The segment at 105–137 (LKVEGYLTRDPRAKERKKYGLRKARKAPQYSKR) is disordered. Over residues 118–137 (KERKKYGLRKARKAPQYSKR) the composition is skewed to basic residues.

It belongs to the universal ribosomal protein uS9 family.

The polypeptide is Small ribosomal subunit protein uS9 (Cyanothece sp. (strain PCC 7425 / ATCC 29141)).